We begin with the raw amino-acid sequence, 104 residues long: QPKSTPTLTVFPPSTEELQGNKATLVCLISDFYPSDVEVAWKANGAPISQGVDTANPTKQGNKYIASSFLRLTAEQWRSRNSFTCQVTHEGNTVEKSLSPAECV.

Residues 6–99 (PTLTVFPPST…EGNTVEKSLS (94 aa)) form the Ig-like domain. A disulfide bridge links Cys-27 with Cys-85.

This Rattus norvegicus (Rat) protein is Ig lambda-2 chain C region.